The following is a 171-amino-acid chain: Myelin basic protein (171 aa).

A1 bears the N-acetylalanine mark. Basic residues predominate over residues 1–12 (ASQKRPSQRHGS). Residues 1–171 (ASQKRPSQRH…SRSGSPMARR (171 aa)) are disordered. Phosphoserine occurs at positions 7 and 12. Residue Y14 is modified to Phosphotyrosine. S19 is subject to Phosphoserine. The residue at position 20 (T20) is a Phosphothreonine. Residues R25 and R31 each carry the citrulline modification. T35 carries the post-translational modification Phosphothreonine. S39 is modified (phosphoserine). An omega-N-methylarginine mark is found at R42 and R48. The residue at position 55 (S55) is a Phosphoserine. T66 carries the post-translational modification Phosphothreonine. Y68 carries the phosphotyrosine modification. Phosphothreonine occurs at positions 95 and 98. The residue at position 103 (Q103) is a Deamidated glutamine. R107 carries the post-translational modification Omega-N-methylarginine; alternate. R107 is subject to Symmetric dimethylarginine; alternate. S115 carries the post-translational modification Phosphoserine. K122 carries the post-translational modification N6-acetyllysine. The residue at position 130 (R130) is a Citrulline. Q148 is modified (deamidated glutamine). R160 carries the post-translational modification Citrulline. S162 is modified (phosphoserine). Phosphoserine; by UHMK1 is present on S166. The residue at position 171 (R171) is a Citrulline.

The protein belongs to the myelin basic protein family. As to quaternary structure, homodimer. As in other animals, several charge isomers may be produced as a result of optional post-translational modifications, such as phosphorylation of serine or threonine residues, deamidation of glutamine or asparagine residues, citrullination and methylation of arginine residues. In terms of processing, phosphorylated by TAOK2, VRK2, MAPK11, MAPK12, MAPK14 and MINK1. Post-translationally, proteolytically cleaved in B cell lysosomes by cathepsin CTSG which degrades the major immunogenic MBP epitope and prevents the activation of MBP-specific autoreactive T cells.

It localises to the myelin membrane. Its function is as follows. Is, with PLP, the most abundant protein component of the myelin membrane in the CNS. Has a role in both the formation and stabilization of this compact multilayer arrangement of bilayers. Each splice variant and charge isomer may have a specialized function in the assembly of an optimized, biochemically functional myelin membrane. This is Myelin basic protein (MBP) from Sus scrofa (Pig).